The sequence spans 512 residues: 2,3-bisphosphoglycerate-independent phosphoglycerate mutase (512 aa).

Mn(2+)-binding residues include Asp13 and Ser63. Ser63 (phosphoserine intermediate) is an active-site residue. Residues His124, 154–155 (RD), Arg186, Arg192, 262–265 (RPDR), and Lys337 each bind substrate. Mn(2+) is bound by residues Asp404, His408, Asp445, His446, and His463.

It belongs to the BPG-independent phosphoglycerate mutase family. As to quaternary structure, monomer. Mn(2+) serves as cofactor.

It carries out the reaction (2R)-2-phosphoglycerate = (2R)-3-phosphoglycerate. The protein operates within carbohydrate degradation; glycolysis; pyruvate from D-glyceraldehyde 3-phosphate: step 3/5. In terms of biological role, essential for rapid growth and for sporulation. Catalyzes the interconversion of 2-phosphoglycerate and 3-phosphoglycerate. This chain is 2,3-bisphosphoglycerate-independent phosphoglycerate mutase, found in Oceanobacillus iheyensis (strain DSM 14371 / CIP 107618 / JCM 11309 / KCTC 3954 / HTE831).